A 307-amino-acid polypeptide reads, in one-letter code: Aspartate carbamoyltransferase catalytic subunit (307 aa).

Carbamoyl phosphate is bound by residues Arg-54 and Thr-55. Lys-83 is an L-aspartate binding site. Residues Arg-104, His-132, and Gln-135 each coordinate carbamoyl phosphate. Arg-165 and Arg-228 together coordinate L-aspartate. The carbamoyl phosphate site is built by Leu-267 and Pro-268.

The protein belongs to the aspartate/ornithine carbamoyltransferase superfamily. ATCase family. As to quaternary structure, heterododecamer (2C3:3R2) of six catalytic PyrB chains organized as two trimers (C3), and six regulatory PyrI chains organized as three dimers (R2).

It carries out the reaction carbamoyl phosphate + L-aspartate = N-carbamoyl-L-aspartate + phosphate + H(+). It functions in the pathway pyrimidine metabolism; UMP biosynthesis via de novo pathway; (S)-dihydroorotate from bicarbonate: step 2/3. In terms of biological role, catalyzes the condensation of carbamoyl phosphate and aspartate to form carbamoyl aspartate and inorganic phosphate, the committed step in the de novo pyrimidine nucleotide biosynthesis pathway. The protein is Aspartate carbamoyltransferase catalytic subunit of Clostridium botulinum (strain Langeland / NCTC 10281 / Type F).